Here is a 96-residue protein sequence, read N- to C-terminus: Large ribosomal subunit protein uL23 (96 aa).

Belongs to the universal ribosomal protein uL23 family. As to quaternary structure, part of the 50S ribosomal subunit. Contacts protein L29, and trigger factor when it is bound to the ribosome.

In terms of biological role, one of the early assembly proteins it binds 23S rRNA. One of the proteins that surrounds the polypeptide exit tunnel on the outside of the ribosome. Forms the main docking site for trigger factor binding to the ribosome. In Brevibacillus brevis (strain 47 / JCM 6285 / NBRC 100599), this protein is Large ribosomal subunit protein uL23.